The following is a 128-amino-acid chain: Glycine cleavage system H protein (128 aa).

In terms of domain architecture, Lipoyl-binding spans 24 to 105 (SLTIGVTDHA…AYAAWLFKLK (82 aa)). Position 65 is an N6-lipoyllysine (Lys65).

It belongs to the GcvH family. The glycine cleavage system is composed of four proteins: P, T, L and H. (R)-lipoate is required as a cofactor.

The glycine cleavage system catalyzes the degradation of glycine. The H protein shuttles the methylamine group of glycine from the P protein to the T protein. The sequence is that of Glycine cleavage system H protein from Aromatoleum aromaticum (strain DSM 19018 / LMG 30748 / EbN1) (Azoarcus sp. (strain EbN1)).